Here is a 251-residue protein sequence, read N- to C-terminus: Triosephosphate isomerase (251 aa).

9-11 is a binding site for substrate; the sequence is NWK. His95 serves as the catalytic Electrophile. The Proton acceptor role is filled by Glu167. Substrate-binding positions include Gly173, Ser212, and 233-234; that span reads GG.

The protein belongs to the triosephosphate isomerase family. In terms of assembly, homodimer.

Its subcellular location is the cytoplasm. The catalysed reaction is D-glyceraldehyde 3-phosphate = dihydroxyacetone phosphate. It participates in carbohydrate biosynthesis; gluconeogenesis. Its pathway is carbohydrate degradation; glycolysis; D-glyceraldehyde 3-phosphate from glycerone phosphate: step 1/1. Involved in the gluconeogenesis. Catalyzes stereospecifically the conversion of dihydroxyacetone phosphate (DHAP) to D-glyceraldehyde-3-phosphate (G3P). The protein is Triosephosphate isomerase of Pseudomonas putida (strain W619).